Reading from the N-terminus, the 235-residue chain is Aspartate/glutamate leucyltransferase (235 aa).

The protein belongs to the R-transferase family. Bpt subfamily.

It is found in the cytoplasm. It carries out the reaction N-terminal L-glutamyl-[protein] + L-leucyl-tRNA(Leu) = N-terminal L-leucyl-L-glutamyl-[protein] + tRNA(Leu) + H(+). The enzyme catalyses N-terminal L-aspartyl-[protein] + L-leucyl-tRNA(Leu) = N-terminal L-leucyl-L-aspartyl-[protein] + tRNA(Leu) + H(+). Its function is as follows. Functions in the N-end rule pathway of protein degradation where it conjugates Leu from its aminoacyl-tRNA to the N-termini of proteins containing an N-terminal aspartate or glutamate. This chain is Aspartate/glutamate leucyltransferase, found in Pseudomonas entomophila (strain L48).